A 273-amino-acid polypeptide reads, in one-letter code: Dermonecrotic toxin LsaSicTox-alphaIB1avi (273 aa).

The active site involves histidine 5. The Mg(2+) site is built by glutamate 25 and aspartate 27. Histidine 41 functions as the Nucleophile in the catalytic mechanism. Cystine bridges form between cysteine 45-cysteine 51 and cysteine 47-cysteine 190. Aspartate 85 contacts Mg(2+).

This sequence belongs to the arthropod phospholipase D family. Class II subfamily. It depends on Mg(2+) as a cofactor. In terms of tissue distribution, expressed by the venom gland.

Its subcellular location is the secreted. It catalyses the reaction an N-(acyl)-sphingosylphosphocholine = an N-(acyl)-sphingosyl-1,3-cyclic phosphate + choline. It carries out the reaction an N-(acyl)-sphingosylphosphoethanolamine = an N-(acyl)-sphingosyl-1,3-cyclic phosphate + ethanolamine. The catalysed reaction is a 1-acyl-sn-glycero-3-phosphocholine = a 1-acyl-sn-glycero-2,3-cyclic phosphate + choline. The enzyme catalyses a 1-acyl-sn-glycero-3-phosphoethanolamine = a 1-acyl-sn-glycero-2,3-cyclic phosphate + ethanolamine. Functionally, dermonecrotic toxins cleave the phosphodiester linkage between the phosphate and headgroup of certain phospholipids (sphingolipid and lysolipid substrates), forming an alcohol (often choline) and a cyclic phosphate. This toxin acts on sphingomyelin (SM). It may also act on ceramide phosphoethanolamine (CPE), lysophosphatidylcholine (LPC) and lysophosphatidylethanolamine (LPE), but not on lysophosphatidylserine (LPS), and lysophosphatidylglycerol (LPG). It acts by transphosphatidylation, releasing exclusively cyclic phosphate products as second products. Induces dermonecrosis, hemolysis, increased vascular permeability, edema, inflammatory response, and platelet aggregation. This is Dermonecrotic toxin LsaSicTox-alphaIB1avi from Loxosceles sabina (Tucson recluse spider).